The chain runs to 132 residues: Myelin P2 protein (132 aa).

Residue S2 is modified to N-acetylserine. (9Z)-octadecenoate contacts are provided by residues R107 and 127 to 129; that span reads RIY. Residues R107 and 127–129 contribute to the hexadecanoate site; that span reads RIY.

It belongs to the calycin superfamily. Fatty-acid binding protein (FABP) family. As to quaternary structure, monomer.

It is found in the cytoplasm. May play a role in lipid transport protein in Schwann cells. May bind cholesterol. The protein is Myelin P2 protein (PMP2) of Oryctolagus cuniculus (Rabbit).